The primary structure comprises 140 residues: uncharacterized protein (140 aa).

The interval T62 to G140 is disordered. Residues P71–S94 are compositionally biased toward low complexity.

This is an uncharacterized protein from Homo sapiens (Human).